A 425-amino-acid chain; its full sequence is 3-isopropylmalate dehydratase large subunit (425 aa).

Positions 306, 366, and 369 each coordinate [4Fe-4S] cluster.

Belongs to the aconitase/IPM isomerase family. LeuC type 2 subfamily. As to quaternary structure, heterodimer of LeuC and LeuD. [4Fe-4S] cluster serves as cofactor.

It catalyses the reaction (2R,3S)-3-isopropylmalate = (2S)-2-isopropylmalate. The protein operates within amino-acid biosynthesis; L-leucine biosynthesis; L-leucine from 3-methyl-2-oxobutanoate: step 2/4. Its function is as follows. Catalyzes the isomerization between 2-isopropylmalate and 3-isopropylmalate, via the formation of 2-isopropylmaleate. The chain is 3-isopropylmalate dehydratase large subunit from Nautilia profundicola (strain ATCC BAA-1463 / DSM 18972 / AmH).